Reading from the N-terminus, the 66-residue chain is U10-theraphotoxin-Cg1a 1 (66 aa).

Residues 1-21 form the signal peptide; the sequence is MKTSVLFVIFGLALLFCLSFA. Residues 22–29 constitute a propeptide that is removed on maturation; it reads AELEDTGR. 3 disulfide bridges follow: cysteine 31/cysteine 46, cysteine 38/cysteine 51, and cysteine 45/cysteine 58.

This sequence belongs to the neurotoxin 10 (Hwtx-1) family. 29 (Jztx-13) subfamily. Expressed by the venom gland.

Its subcellular location is the secreted. Its function is as follows. Probable ion channel inhibitor. The protein is U10-theraphotoxin-Cg1a 1 of Chilobrachys guangxiensis (Chinese earth tiger tarantula).